The primary structure comprises 235 residues: Urease accessory protein UreF (235 aa).

This sequence belongs to the UreF family. UreD, UreF and UreG form a complex that acts as a GTP-hydrolysis-dependent molecular chaperone, activating the urease apoprotein by helping to assemble the nickel containing metallocenter of UreC. The UreE protein probably delivers the nickel.

It is found in the cytoplasm. Its function is as follows. Required for maturation of urease via the functional incorporation of the urease nickel metallocenter. The chain is Urease accessory protein UreF from Haemophilus influenzae (strain 86-028NP).